We begin with the raw amino-acid sequence, 377 residues long: Phosphoserine aminotransferase (377 aa).

Arg43 contacts L-glutamate. 4 residues coordinate pyridoxal 5'-phosphate: Trp105, Thr164, Asp189, and Gln212. Lys213 is modified (N6-(pyridoxal phosphate)lysine). Residue 254-255 (NT) participates in pyridoxal 5'-phosphate binding.

It belongs to the class-V pyridoxal-phosphate-dependent aminotransferase family. SerC subfamily. In terms of assembly, homodimer. It depends on pyridoxal 5'-phosphate as a cofactor.

It localises to the cytoplasm. The enzyme catalyses O-phospho-L-serine + 2-oxoglutarate = 3-phosphooxypyruvate + L-glutamate. The catalysed reaction is 4-(phosphooxy)-L-threonine + 2-oxoglutarate = (R)-3-hydroxy-2-oxo-4-phosphooxybutanoate + L-glutamate. Its pathway is amino-acid biosynthesis; L-serine biosynthesis; L-serine from 3-phospho-D-glycerate: step 2/3. It participates in cofactor biosynthesis; pyridoxine 5'-phosphate biosynthesis; pyridoxine 5'-phosphate from D-erythrose 4-phosphate: step 3/5. Catalyzes the reversible conversion of 3-phosphohydroxypyruvate to phosphoserine and of 3-hydroxy-2-oxo-4-phosphonooxybutanoate to phosphohydroxythreonine. This is Phosphoserine aminotransferase from Bordetella pertussis (strain Tohama I / ATCC BAA-589 / NCTC 13251).